The sequence spans 136 residues: Histone H3 (136 aa).

Belongs to the histone H3 family. The nucleosome is a histone octamer containing two molecules each of H2A, H2B, H3 and H4 assembled in one H3-H4 heterotetramer and two H2A-H2B heterodimers. The octamer wraps approximately 147 bp of DNA.

It is found in the nucleomorph. It localises to the chromosome. Core component of nucleosome. Nucleosomes wrap and compact DNA into chromatin, limiting DNA accessibility to the cellular machineries which require DNA as a template. Histones thereby play a central role in transcription regulation, DNA repair, DNA replication and chromosomal stability. DNA accessibility is regulated via a complex set of post-translational modifications of histones, also called histone code, and nucleosome remodeling. The polypeptide is Histone H3 (Guillardia theta (Cryptophyte)).